The chain runs to 435 residues: GTPase Der (435 aa).

2 consecutive EngA-type G domains span residues K4–D167 and T175–S350. Residues G10–S17, D57–I61, N119–D122, G181–S188, D228–I232, and N293–D296 contribute to the GTP site. Residues V351–K435 form the KH-like domain.

It belongs to the TRAFAC class TrmE-Era-EngA-EngB-Septin-like GTPase superfamily. EngA (Der) GTPase family. As to quaternary structure, associates with the 50S ribosomal subunit.

Functionally, GTPase that plays an essential role in the late steps of ribosome biogenesis. The polypeptide is GTPase Der (Mycoplasma capricolum subsp. capricolum (strain California kid / ATCC 27343 / NCTC 10154)).